A 375-amino-acid chain; its full sequence is MQCVQYTAGHCHSCQWLDKSYSHQLSDKQKHLKQLLQETSVTHWLSPVMSKTSGFRNKAKMVVNGSVERPLLGMLHRDGRTVDLCDCPLYPQHFQAVFEVIKVFIAKAGLVPYNVERRKGELKYILLTESRANNEMMLRFVLRSETKLAQLERVLPWLQEQLPQLTVISANIQPTHMAILEGEKEIIFTGQTMLKETFNGIPLYIRPRSFFQTNPDIASELYATAGRWVRELNISSMWDLFCGAGGFGLHCADKETKLTGIEISAEAIDCAKSSAKSLGLKSVEFQALDSTHFALEKAKIPELVLVNPPRRGIGKELCEYLSRMAPKFVLYSSCNAETMAKDIAMLKQYRIEKVQLFDMFPHTEHYETLALLILD.

Residues C3, C11, C14, and C87 each contribute to the [4Fe-4S] cluster site. Positions 212, 241, 262, and 307 each coordinate S-adenosyl-L-methionine. Residue C334 is the Nucleophile of the active site.

The protein belongs to the class I-like SAM-binding methyltransferase superfamily. RNA M5U methyltransferase family. RlmC subfamily.

The catalysed reaction is uridine(747) in 23S rRNA + S-adenosyl-L-methionine = 5-methyluridine(747) in 23S rRNA + S-adenosyl-L-homocysteine + H(+). Catalyzes the formation of 5-methyl-uridine at position 747 (m5U747) in 23S rRNA. This is 23S rRNA (uracil(747)-C(5))-methyltransferase RlmC from Xenorhabdus nematophila (strain ATCC 19061 / DSM 3370 / CCUG 14189 / LMG 1036 / NCIMB 9965 / AN6).